The following is a 594-amino-acid chain: Glutamate decarboxylase 1 (594 aa).

Low complexity predominate over residues 1–13; the sequence is MASSTPSSSATSS. Positions 1-23 are disordered; that stretch reads MASSTPSSSATSSNAGADPNTTN. Phosphoserine is present on Ser-78. 190–192 contacts 4-aminobutanoate; sequence QLS. Residue Lys-405 is modified to N6-(pyridoxal phosphate)lysine. Arg-567 provides a ligand contact to 4-aminobutanoate.

Belongs to the group II decarboxylase family. Homodimer. The cofactor is pyridoxal 5'-phosphate.

It carries out the reaction L-glutamate + H(+) = 4-aminobutanoate + CO2. Functionally, catalyzes the synthesis of the inhibitory neurotransmitter gamma-aminobutyric acid (GABA) with pyridoxal 5'-phosphate as cofactor. The polypeptide is Glutamate decarboxylase 1 (GAD1) (Bos taurus (Bovine)).